We begin with the raw amino-acid sequence, 462 residues long: UDP-N-acetylmuramate--L-alanine ligase (462 aa).

Residue glycine 116 to threonine 122 coordinates ATP.

It belongs to the MurCDEF family.

The protein resides in the cytoplasm. It catalyses the reaction UDP-N-acetyl-alpha-D-muramate + L-alanine + ATP = UDP-N-acetyl-alpha-D-muramoyl-L-alanine + ADP + phosphate + H(+). The protein operates within cell wall biogenesis; peptidoglycan biosynthesis. Cell wall formation. The sequence is that of UDP-N-acetylmuramate--L-alanine ligase from Desulforamulus reducens (strain ATCC BAA-1160 / DSM 100696 / MI-1) (Desulfotomaculum reducens).